The chain runs to 174 residues: MKFLLLTVGLALIGAIQAVENIRSKNDLGVEKFVGSWYLREAAKTMEFSIPLFDMDIKEVNLTPEGNLELVLLEKADRCVEKKLLLKKTQKPTEFEIYISSESASYTFSVMETDYDSYFLFCLYNISDREKMACAHYVRRIEENKGMNEFKKILRTLAMPYTVIEVRTRDMCHV.

The first 18 residues, 1–18 (MKFLLLTVGLALIGAIQA), serve as a signal peptide directing secretion. 2 cysteine pairs are disulfide-bonded: Cys79–Cys172 and Cys122–Cys134.

This sequence belongs to the calycin superfamily. Lipocalin family. Monomer.

It localises to the secreted. Functionally, lactoglobulin is the primary component of whey, it binds retinol and is probably involved in the transport of that molecule. This chain is Beta-lactoglobulin (LGB), found in Notamacropus eugenii (Tammar wallaby).